Consider the following 207-residue polypeptide: Probable nicotinate-nucleotide adenylyltransferase (207 aa).

Belongs to the NadD family.

It catalyses the reaction nicotinate beta-D-ribonucleotide + ATP + H(+) = deamido-NAD(+) + diphosphate. It functions in the pathway cofactor biosynthesis; NAD(+) biosynthesis; deamido-NAD(+) from nicotinate D-ribonucleotide: step 1/1. Catalyzes the reversible adenylation of nicotinate mononucleotide (NaMN) to nicotinic acid adenine dinucleotide (NaAD). In Desulfitobacterium hafniense (strain Y51), this protein is Probable nicotinate-nucleotide adenylyltransferase.